Consider the following 332-residue polypeptide: Glycerol-3-phosphate dehydrogenase [NAD(P)+] (332 aa).

NADPH-binding residues include tryptophan 11, arginine 30, and lysine 108. The sn-glycerol 3-phosphate site is built by lysine 108, glycine 137, and serine 139. Alanine 141 contributes to the NADPH binding site. Sn-glycerol 3-phosphate-binding residues include lysine 192, aspartate 245, serine 255, arginine 256, and asparagine 257. Catalysis depends on lysine 192, which acts as the Proton acceptor. NADPH is bound at residue arginine 256. Residues valine 280 and glutamate 282 each contribute to the NADPH site.

The protein belongs to the NAD-dependent glycerol-3-phosphate dehydrogenase family.

It localises to the cytoplasm. The enzyme catalyses sn-glycerol 3-phosphate + NAD(+) = dihydroxyacetone phosphate + NADH + H(+). The catalysed reaction is sn-glycerol 3-phosphate + NADP(+) = dihydroxyacetone phosphate + NADPH + H(+). The protein operates within membrane lipid metabolism; glycerophospholipid metabolism. Functionally, catalyzes the reduction of the glycolytic intermediate dihydroxyacetone phosphate (DHAP) to sn-glycerol 3-phosphate (G3P), the key precursor for phospholipid synthesis. The chain is Glycerol-3-phosphate dehydrogenase [NAD(P)+] from Burkholderia pseudomallei (strain 1710b).